We begin with the raw amino-acid sequence, 155 residues long: Ribosomal RNA large subunit methyltransferase H (155 aa).

Residues L72, G103, and 122 to 127 (LSTLTL) each bind S-adenosyl-L-methionine.

The protein belongs to the RNA methyltransferase RlmH family. As to quaternary structure, homodimer.

The protein localises to the cytoplasm. It catalyses the reaction pseudouridine(1915) in 23S rRNA + S-adenosyl-L-methionine = N(3)-methylpseudouridine(1915) in 23S rRNA + S-adenosyl-L-homocysteine + H(+). Functionally, specifically methylates the pseudouridine at position 1915 (m3Psi1915) in 23S rRNA. The sequence is that of Ribosomal RNA large subunit methyltransferase H from Klebsiella pneumoniae (strain 342).